Reading from the N-terminus, the 248-residue chain is Trypsin I-P38 (248 aa).

The signal sequence occupies residues 1 to 15; sequence MKFLVLVAFLGVAVA. A propeptide spans 16–25 (activation peptide); that stretch reads FPISDEDDDK. The Peptidase S1 domain maps to 26 to 246; that stretch reads IVGGYSCARS…YVSWIKTTMS (221 aa). Intrachain disulfides connect Cys32–Cys162, Cys50–Cys66, Cys134–Cys235, Cys141–Cys208, Cys173–Cys187, and Cys198–Cys222. The active-site Charge relay system is the His65. 3 residues coordinate Ca(2+): Glu77, Asn79, and Glu87. Catalysis depends on Asp109, which acts as the Charge relay system. Ser202 serves as the catalytic Charge relay system.

The protein belongs to the peptidase S1 family. Requires Ca(2+) as cofactor. As to expression, high levels are seen in the pancreas while lower levels are found in the liver, spleen and thymus.

The protein localises to the secreted. The protein resides in the extracellular space. It catalyses the reaction Preferential cleavage: Arg-|-Xaa, Lys-|-Xaa.. The protein is Trypsin I-P38 of Gallus gallus (Chicken).